The following is a 58-amino-acid chain: Temporin-1Th (58 aa).

The signal sequence occupies residues 1 to 22 (MFTLKKSLLLLFFLGTINLSLC). Residues 23 to 46 (EEERNAEEERRDEPDERDVQVEKR) constitute a propeptide that is removed on maturation. A disordered region spans residues 25-46 (ERNAEEERRDEPDERDVQVEKR). At L56 the chain carries Leucine amide.

Expressed by the skin glands.

The protein localises to the secreted. Antimicrobial peptide that renders both the outer and inner membrane of bacteria permeable to hydrophobic substances of low molecular mass. The protein is Temporin-1Th of Rana temporaria (European common frog).